The primary structure comprises 467 residues: MELNMNQYDNIESNDSPPTPSSPGEEGNVEKKEKKSGRRKINIEFIGDKSRRHITFSKRKSGIMKKAYELSTLTGTQVLLIVASETGHVYTFATPKLQPLITKQEGKTLIQACLNTPDVPPVSKDDGNNNNGNNSNNNNNSNNNNSSNNNNNGNNNNGNTNNNNGNNNNSNNNNSGNNNNNNNNNSYNNNNNNNNNNNNNNNNNNCKEEQNMNIPNERKSKNNINNNNNNQNNNQNNNQNNNNLTQPIQNLQLPLQQNIIAQQQQQLNQQAALQQQMTQQIDQKLYNLQLQQQQMQQQQQIQNISGGSGNNSNGYINGNGMNGNNNNNNNSNNIPEYGQVIIQSYRGSNSGGNNSSNNTSTNTNTNTNTNTNNNNNNSNSSNGNNSNNNSNNILPQNLTTPSPIISQPLPSIPSPSSSSSNIGNSGYSSPFSTSFSYGGYQQPFSRNYPLQSNIATNSTVSKAPSDL.

The span at Met1 to Asp15 shows a compositional bias: polar residues. Disordered regions lie at residues Met1–Arg38, Asn115–Thr245, and Ile301–Leu467. Residues Ser36–Lys96 form the MADS-box domain. Over residues Asn128–Asn205 the composition is skewed to low complexity. Residues Cys206–Ser220 are compositionally biased toward basic and acidic residues. 4 stretches are compositionally biased toward low complexity: residues Asn222–Thr245, Ile301–Ile334, Gly347–Asn392, and Pro401–Tyr440. Residues Gln442–Leu467 are compositionally biased toward polar residues.

The protein localises to the nucleus. This is Serum response factor homolog B (srfB) from Dictyostelium discoideum (Social amoeba).